Consider the following 432-residue polypeptide: Trigger factor (432 aa).

The 86-residue stretch at 161-246 folds into the PPIase FKBP-type domain; it reads EDRVTIDFTG…LKKVEERELP (86 aa).

The protein belongs to the FKBP-type PPIase family. Tig subfamily. In terms of assembly, homodimer and monomer. In vivo most of the ribosomes are in complex with monomeric TF. Uncomplexed TF, however, is in a monomer-dimer equilibrium with approximately two thirds of TF existing in a dimeric state.

Its subcellular location is the cytoplasm. It catalyses the reaction [protein]-peptidylproline (omega=180) = [protein]-peptidylproline (omega=0). In terms of biological role, involved in protein export. Acts as a chaperone by maintaining the newly synthesized protein in an open conformation. Functions as a peptidyl-prolyl cis-trans isomerase. This Escherichia coli O127:H6 (strain E2348/69 / EPEC) protein is Trigger factor.